The primary structure comprises 863 residues: Valine--tRNA ligase (863 aa).

Positions 43–53 (PYPTGSFHIGH) match the 'HIGH' region motif. Positions 517–521 (KMSKS) match the 'KMSKS' region motif. K520 lines the ATP pocket.

The protein belongs to the class-I aminoacyl-tRNA synthetase family. ValS type 2 subfamily.

The protein localises to the cytoplasm. The catalysed reaction is tRNA(Val) + L-valine + ATP = L-valyl-tRNA(Val) + AMP + diphosphate. Functionally, catalyzes the attachment of valine to tRNA(Val). As ValRS can inadvertently accommodate and process structurally similar amino acids such as threonine, to avoid such errors, it has a 'posttransfer' editing activity that hydrolyzes mischarged Thr-tRNA(Val) in a tRNA-dependent manner. This is Valine--tRNA ligase from Archaeoglobus fulgidus (strain ATCC 49558 / DSM 4304 / JCM 9628 / NBRC 100126 / VC-16).